The following is a 64-amino-acid chain: Small ribosomal subunit protein bS21 (64 aa).

This sequence belongs to the bacterial ribosomal protein bS21 family.

This is Small ribosomal subunit protein bS21 from Flavobacterium johnsoniae (strain ATCC 17061 / DSM 2064 / JCM 8514 / BCRC 14874 / CCUG 350202 / NBRC 14942 / NCIMB 11054 / UW101) (Cytophaga johnsonae).